We begin with the raw amino-acid sequence, 327 residues long: Aspartate--ammonia ligase (327 aa).

The protein belongs to the class-II aminoacyl-tRNA synthetase family. AsnA subfamily.

Its subcellular location is the cytoplasm. The catalysed reaction is L-aspartate + NH4(+) + ATP = L-asparagine + AMP + diphosphate + H(+). The protein operates within amino-acid biosynthesis; L-asparagine biosynthesis; L-asparagine from L-aspartate (ammonia route): step 1/1. The polypeptide is Aspartate--ammonia ligase (Bacillus cereus (strain B4264)).